Reading from the N-terminus, the 428-residue chain is Cyclic AMP-responsive element-binding protein 3-like protein 4 (428 aa).

Residues 1–68 (MLLGSLFEQT…EFLQMMINPN (68 aa)) form a required for transcriptional activation region. The Cytoplasmic segment spans residues 1–294 (MLLGSLFEQT…QTSNKAAQTS (294 aa)). A disordered region spans residues 71–111 (YSTGPAAAESPESDSGFSDDPRPDTPPQSETSPPLPQPTPV). Positions 216-279 (ILKKVRRKIR…ISLITQLRKL (64 aa)) constitute a bZIP domain. Positions 218–247 (KKVRRKIRNKQSAQDSRRRKKEYIDGLESR) are basic motif. Residues 258-279 (LHKKVVELEKHNISLITQLRKL) form a leucine-zipper region. The helical; Signal-anchor for type II membrane protein transmembrane segment at 295–315 (TCVLILLFSLALLVFPSYSPF) threads the bilayer. The Lumenal portion of the chain corresponds to 316–428 (RSRPSASQED…LSKTARADEM (113 aa)). The tract at residues 339 to 428 (NKGGFSEVAD…LSKTARADEM (90 aa)) is disordered. Over residues 354-368 (TLHRAQQREEGDPGR) the composition is skewed to basic and acidic residues. N-linked (GlcNAc...) asparagine glycosylation is present at Asn-418.

Belongs to the bZIP family. ATF subfamily. As to quaternary structure, binds DNA as a dimer. In terms of processing, controlled by regulated intramembrane proteolysis (RIP). A fragment containing the cytoplasmic transcription factor domain is released by proteolysis. The cleavage seems to be performed sequentially by site-1 and site-2 proteases (PS1 and PS2).

The protein resides in the endoplasmic reticulum membrane. It is found in the nucleus. Functionally, transcriptional activator. This chain is Cyclic AMP-responsive element-binding protein 3-like protein 4 (creb3l4), found in Xenopus tropicalis (Western clawed frog).